Here is a 52-residue protein sequence, read N- to C-terminus: Light-harvesting protein B800/830/1020 alpha-1 chain (52 aa).

Over 1-12 (MWRIWKVFDPRR) the chain is Cytoplasmic. A helical membrane pass occupies residues 13 to 33 (ILIATAIWLIIIALTIHVILM). His29 is an a bacteriochlorophyll binding site. At 34–52 (TTERFNWLEGAPAAEYYSS) the chain is on the periplasmic side.

The protein belongs to the antenna complex alpha subunit family. In terms of assembly, the core complex is formed by different alpha and beta chains, binding bacteriochlorophyll molecules, and arranged most probably in tetrameric structures disposed around the reaction center. The non-pigmented gamma chains may constitute additional components.

It is found in the cell inner membrane. In terms of biological role, antenna complexes are light-harvesting systems, which transfer the excitation energy to the reaction centers. This chain is Light-harvesting protein B800/830/1020 alpha-1 chain, found in Halorhodospira halochloris (Ectothiorhodospira halochloris).